A 128-amino-acid chain; its full sequence is Small ribosomal subunit protein bS6 (128 aa).

The protein belongs to the bacterial ribosomal protein bS6 family.

Its function is as follows. Binds together with bS18 to 16S ribosomal RNA. The polypeptide is Small ribosomal subunit protein bS6 (Thermotoga petrophila (strain ATCC BAA-488 / DSM 13995 / JCM 10881 / RKU-1)).